The following is a 107-amino-acid chain: Virulence factor PGA16 (107 aa).

The signal sequence occupies residues 1-18 (MRVFQIVYILIISNLIYA). The tract at residues 26 to 56 (SHHHKNDNNIADNTNNNNNNNNNNNNNNITN) is disordered. A compositionally biased stretch (low complexity) spans 33-56 (NNIADNTNNNNNNNNNNNNNNITN). Residues N53 and N56 are each glycosylated (N-linked (GlcNAc...) asparagine). G76 carries GPI-anchor amidated glycine lipidation. A propeptide spans 77 to 107 (VAAMGGILGQNGWFYGDAGLMAAIFGAMLLL) (removed in mature form).

The protein localises to the cell membrane. Cell surface GPI-anchored protein required for virulence. Mediates hyphal ramification which is important for the interaction with host cells. The polypeptide is Virulence factor PGA16 (PGA16) (Candida albicans (strain SC5314 / ATCC MYA-2876) (Yeast)).